Here is a 213-residue protein sequence, read N- to C-terminus: MNIFGKKSQTFKPKKNIQEGSKQYHLKQYAEATLGSGNLKSAVSLPTGEDINEWLAVNTTDFFNQINMLYGTITEFCTGTDCPVMSAGPKYEYHWADGTTVKKAIKVSAPEYVDFLMTWVQSQLDDENIFPSKIGVPFPKNFQSIVKTIFKRLFRVYAHIYHSHFQKIVSLGEEAHLNTSLKHFIYFIQEFNLVDKKELGPLNELIESLMKNP.

Positions 77, 82, 159, and 164 each coordinate Zn(2+).

It belongs to the MOB1/phocein family.

The sequence is that of MOB kinase activator-like 1 homolog A (mobA) from Dictyostelium discoideum (Social amoeba).